The chain runs to 332 residues: D-lactate dehydrogenase (332 aa).

Residues 155–156, Asp-175, 206–207, Asn-212, 233–235, and Asp-259 each bind NAD(+); these read RI, VP, and FAR. Residue Arg-235 is part of the active site. Glu-264 is a catalytic residue. Residue His-296 is the Proton donor of the active site.

It belongs to the D-isomer specific 2-hydroxyacid dehydrogenase family.

The catalysed reaction is (R)-lactate + NAD(+) = pyruvate + NADH + H(+). This is D-lactate dehydrogenase (ldhD) from Lactiplantibacillus plantarum (strain ATCC BAA-793 / NCIMB 8826 / WCFS1) (Lactobacillus plantarum).